The primary structure comprises 236 residues: Uridylate kinase (236 aa).

12 to 15 (KLSG) lines the ATP pocket. Residues 20-25 (GEKGFG) are involved in allosteric activation by GTP. Residue Gly54 participates in UMP binding. ATP-binding residues include Gly55 and Arg59. UMP contacts are provided by residues Asp72 and 133–140 (TGNPYFST). Residues Asn161, Tyr166, and Asp169 each coordinate ATP.

This sequence belongs to the UMP kinase family. Homohexamer.

It is found in the cytoplasm. The enzyme catalyses UMP + ATP = UDP + ADP. The protein operates within pyrimidine metabolism; CTP biosynthesis via de novo pathway; UDP from UMP (UMPK route): step 1/1. With respect to regulation, allosterically activated by GTP. Inhibited by UTP. Its function is as follows. Catalyzes the reversible phosphorylation of UMP to UDP. The sequence is that of Uridylate kinase from Alkaliphilus oremlandii (strain OhILAs) (Clostridium oremlandii (strain OhILAs)).